The sequence spans 226 residues: PKHD-type hydroxylase PP_0862 (226 aa).

Residues 78-178 (KVFPPLINCY…RYAAFFWTQS (101 aa)) enclose the Fe2OG dioxygenase domain. The Fe cation site is built by H96, D98, and H159. R169 is a 2-oxoglutarate binding site.

Requires Fe(2+) as cofactor. The cofactor is L-ascorbate.

The chain is PKHD-type hydroxylase PP_0862 from Pseudomonas putida (strain ATCC 47054 / DSM 6125 / CFBP 8728 / NCIMB 11950 / KT2440).